The following is a 263-amino-acid chain: MSVDNFRLDGKVALVTGSGRGIGAAIAIELGKRGANVVVNYSRAVAEANKVVETIIANGTKAIAIKADVGEIDQVAKMMDQAVEHFGQLDIVSSNAGLVSFGHLKDVTGDEFDRVFRVNTRGQFFVAREAYRHLSVGGRIILTSSNTASIKGVPKHAIYSGSKGAIDTFVRCMAIDAGDKKITVNAVAPGAIKTDMYAAVAREYIPGGDKFTDEQVDECAAWLSPLERVGLPADIGRVVCFLASDAAEWVSGKILGIDGGAFR.

NADP(+) is bound by residues isoleucine 22, aspartate 68, asparagine 95, and arginine 128. Catalysis depends on proton donor residues serine 144 and serine 145. NADP(+) is bound by residues tyrosine 159, lysine 163, isoleucine 192, and threonine 194. The active-site Proton acceptor is tyrosine 159. Lysine 163 acts as the Lowers pKa of active site Tyr in catalysis.

Belongs to the short-chain dehydrogenases/reductases (SDR) family.

The protein localises to the cytoplasm. The protein resides in the cytosol. The protein operates within mycotoxin biosynthesis. Functionally, versicolorin reductase; part of the fragmented gene cluster that mediates the biosynthesis of dothistromin (DOTH), a polyketide toxin very similar in structure to the aflatoxin precursor, versicolorin B. The first step of the pathway is the conversion of acetate to norsolorinic acid (NOR) and requires the fatty acid synthase subunits hexA and hexB, as well as the polyketide synthase pksA. PksA combines a hexanoyl starter unit and 7 malonyl-CoA extender units to synthesize the precursor NOR. The hexanoyl starter unit is provided to the acyl-carrier protein (ACP) domain by the fungal fatty acid synthase hexA/hexB. The second step is the conversion of NOR to averantin (AVN) and requires the norsolorinic acid ketoreductase nor1, which catalyzes the dehydration of norsolorinic acid to form (1'S)-averantin. The cytochrome P450 monooxygenase avnA then catalyzes the hydroxylation of AVN to 5'hydroxyaverantin (HAVN). The next step is performed by adhA that transforms HAVN to averufin (AVF). Averufin might then be converted to hydroxyversicolorone by cypX and avfA. Hydroxyversicolorone is further converted versiconal hemiacetal acetate (VHA) by moxY. VHA is then the substrate for the versiconal hemiacetal acetate esterase est1 to yield versiconal (VAL). Versicolorin B synthase vbsA then converts VAL to versicolorin B (VERB) by closing the bisfuran ring. Then, the activity of the versicolorin B desaturase verB leads to versicolorin A (VERA). DotB, a predicted chloroperoxidase, may perform epoxidation of the A-ring of VERA. Alternatively, a cytochrome P450, such as cypX or avnA could catalyze this step. It is also possible that another, uncharacterized, cytochrome P450 enzyme is responsible for this step. Opening of the epoxide could potentially be achieved by the epoxide hydrolase epoA. However, epoA seems not to be required for DOTH biosynthesis, but other epoxide hydrolases may have the ability to complement this hydrolysis. Alternatively, opening of the epoxide ring could be achieved non-enzymatically. The next step is the deoxygenation of ring A to yield the 5,8-dihydroxyanthraquinone which is most likely catalyzed by the NADPH dehydrogenase encoded by ver1. The last stages of DOTH biosynthesis are proposed to involve hydroxylation of the bisfuran. OrdB and norB might have oxidative roles here. An alternative possibility is that cytochrome P450 monoogenases such as avnA and cypX might perform these steps in addition to previously proposed steps. In Dothistroma septosporum (Red band needle blight fungus), this protein is Versicolorin reductase 1.